A 374-amino-acid polypeptide reads, in one-letter code: Putative serine/threonine-protein kinase ZK507.3 (374 aa).

A Protein kinase domain is found at 25 to 296 (WKVIVELGKG…CKLTLKEPLV (272 aa)). ATP contacts are provided by residues 31 to 39 (LGKGGYGTV) and lysine 60. Residue aspartate 158 is the Proton acceptor of the active site. The disordered stretch occupies residues 302–374 (NDNESGSTPT…KTRNKKPSRK (73 aa)). Residues 306 to 324 (SGSTPTTSATACSPSSSTG) show a composition bias toward low complexity. The segment covering 334–343 (IASNIDQKSI) has biased composition (polar residues). A compositionally biased stretch (basic residues) spans 364–374 (TKTRNKKPSRK).

This sequence belongs to the protein kinase superfamily. Ser/Thr protein kinase family.

The catalysed reaction is L-seryl-[protein] + ATP = O-phospho-L-seryl-[protein] + ADP + H(+). The enzyme catalyses L-threonyl-[protein] + ATP = O-phospho-L-threonyl-[protein] + ADP + H(+). The protein is Putative serine/threonine-protein kinase ZK507.3 of Caenorhabditis elegans.